Consider the following 347-residue polypeptide: Heat-inducible transcription repressor HrcA (347 aa).

Belongs to the HrcA family.

Negative regulator of class I heat shock genes (grpE-dnaK-dnaJ and groELS operons). Prevents heat-shock induction of these operons. The sequence is that of Heat-inducible transcription repressor HrcA from Rhodococcus erythropolis (strain PR4 / NBRC 100887).